A 157-amino-acid polypeptide reads, in one-letter code: 2-C-methyl-D-erythritol 2,4-cyclodiphosphate synthase (157 aa).

Residues Asp8 and His10 each coordinate a divalent metal cation. Residues 8-10 (DVH) and 34-35 (HS) each bind 4-CDP-2-C-methyl-D-erythritol 2-phosphate. Residue His42 participates in a divalent metal cation binding. Residues 56 to 58 (DIG), 61 to 65 (FPDTD), 100 to 106 (AQAPKMA), 132 to 135 (TTEE), Phe139, and Arg142 each bind 4-CDP-2-C-methyl-D-erythritol 2-phosphate.

It belongs to the IspF family. As to quaternary structure, homotrimer. A divalent metal cation serves as cofactor.

The catalysed reaction is 4-CDP-2-C-methyl-D-erythritol 2-phosphate = 2-C-methyl-D-erythritol 2,4-cyclic diphosphate + CMP. Its pathway is isoprenoid biosynthesis; isopentenyl diphosphate biosynthesis via DXP pathway; isopentenyl diphosphate from 1-deoxy-D-xylulose 5-phosphate: step 4/6. Its function is as follows. Involved in the biosynthesis of isopentenyl diphosphate (IPP) and dimethylallyl diphosphate (DMAPP), two major building blocks of isoprenoid compounds. Catalyzes the conversion of 4-diphosphocytidyl-2-C-methyl-D-erythritol 2-phosphate (CDP-ME2P) to 2-C-methyl-D-erythritol 2,4-cyclodiphosphate (ME-CPP) with a corresponding release of cytidine 5-monophosphate (CMP). This is 2-C-methyl-D-erythritol 2,4-cyclodiphosphate synthase from Pseudomonas entomophila (strain L48).